The primary structure comprises 296 residues: uncharacterized protein (296 aa).

6 consecutive transmembrane segments (helical) span residues 10-29, 36-58, 112-131, 188-210, 241-260, and 273-295; these read FSTL…FSLL, YIVL…YYIL, FFAL…MFVT, ILIF…LYLR, MMYG…SAYF, and MYIS…VTYI.

The protein localises to the cell membrane. This is an uncharacterized protein from Clostridium acetobutylicum (strain ATCC 824 / DSM 792 / JCM 1419 / IAM 19013 / LMG 5710 / NBRC 13948 / NRRL B-527 / VKM B-1787 / 2291 / W).